The chain runs to 501 residues: MRERITFIQKQGDSIEPTTLKIKGGVLNGPEIQAAREDRLTIAIDELPKDLQALLGTAHELHIRYVSSQPYEAITPLLARLPPGFHLFYTPAGQADATSPALCLALNQIFGNVQCENPEKSFTTLPRDRFSHSAAYQFYQPSVDLSPFIALVKEKLCSSSKDQSCAARADRLANASSLDISYDAISHAVKLTATWPYQKQEVHATSRPQTRTEVGVLNSDRPGHLEPHELGISGLLTVLGQDKKPSATMFAFASRHRDAESSFSAEFLEPTGLHPTLKLRLESSKPPIEDAYCSPHAYFTLPKTIFADRHQLSDDLFLASKNLTGLRYISQPVDLEAPEYVEKRWGSSLLLELSPPEHEESKSWTVQVPLHLRYLSPAEGGYTDIQVPYPAVFWACAAEEGTKFPNNPFEKANLGYDGLFGPRTVFWHVEPRPTIGSRLSNMIKVPVLDTNKAEWVSGGTGLAVLLGFAWIMWKLFGVLSKSGYQNQPSQAAEVVKAKKNQ.

The Lumenal portion of the chain corresponds to 1–458; it reads MRERITFIQK…DTNKAEWVSG (458 aa). 2 N-linked (GlcNAc...) asparagine glycosylation sites follow: Asn174 and Asn322. Residues 459 to 479 form a helical membrane-spanning segment; it reads GTGLAVLLGFAWIMWKLFGVL. At 480-501 the chain is on the cytoplasmic side; that stretch reads SKSGYQNQPSQAAEVVKAKKNQ.

The protein belongs to the PIGX family.

The protein resides in the endoplasmic reticulum membrane. Its pathway is glycolipid biosynthesis; glycosylphosphatidylinositol-anchor biosynthesis. Required for proper folding and/or the stability of a subset of proteins in the endoplasmic reticulum. Component of glycosylphosphatidylinositol-mannosyltransferase 1 which transfers the first of the 4 mannoses in the GPI-anchor precursors during GPI-anchor biosynthesis. Probably acts by stabilizing the mannosyltransferase gim-1/gpi14. The polypeptide is Protein pbn1 (pbn1) (Neurospora crassa (strain ATCC 24698 / 74-OR23-1A / CBS 708.71 / DSM 1257 / FGSC 987)).